The following is a 354-amino-acid chain: Phenylalanine 4-monooxygenase, chloroplastic (354 aa).

Residues 1 to 60 (MAFPLQKTFLCSNGQSFPCSNGRSTSTLLASDLKFQRLNKPFILRVGSMQIRNSPKEHPR) constitute a chloroplast transit peptide. Residues histidine 229, histidine 234, and glutamate 274 each contribute to the Fe cation site.

Belongs to the biopterin-dependent aromatic amino acid hydroxylase family. In terms of assembly, forms monomers. It depends on Fe(2+) as a cofactor.

It localises to the plastid. The protein localises to the chloroplast. The enzyme catalyses (6R)-L-erythro-5,6,7,8-tetrahydrobiopterin + L-phenylalanine + O2 = (4aS,6R)-4a-hydroxy-L-erythro-5,6,7,8-tetrahydrobiopterin + L-tyrosine. Functionally, catalyzes the hydroxylation of L-phenylalanine to L-tyrosine. Does not seem to be tetrahydropterin-dependent and shows preference for 10-formyltetrahydrofolate as cosubstrate and electron donor. In Pinus taeda (Loblolly pine), this protein is Phenylalanine 4-monooxygenase, chloroplastic.